A 183-amino-acid polypeptide reads, in one-letter code: uncharacterized protein (183 aa).

A disordered region spans residues 1 to 23; it reads MGSSFVIDRSSSSPAPPRGPAPK.

This is an uncharacterized protein from Saccharomyces cerevisiae (strain ATCC 204508 / S288c) (Baker's yeast).